Consider the following 200-residue polypeptide: Casparian strip membrane protein 1 (200 aa).

The Cytoplasmic segment spans residues 1–38 (MSTTIEIPAESSAVAKGKAPLIGASSSSYEKKGGYKKG). Residues 39-59 (IAIFDFILRLGAVISALSAAA) form a helical membrane-spanning segment. Topologically, residues 60–88 (TMGTSDETLPFFTQFFQFEAGYDDFPTFQ) are extracellular. Residues 89–109 (FFVIAMGFVGGYLVLSLPFSV) form a helical membrane-spanning segment. Over 110–121 (VAIIRPHAVGIR) the chain is Cytoplasmic. The chain crosses the membrane as a helical span at residues 122-142 (LLLLILDTVALTLNTAAAAAA). Topologically, residues 143 to 175 (AAIVYLAHNGNQSANWLAVCQQFGDFCQKVSGG) are extracellular. Asn-153 carries an N-linked (GlcNAc...) asparagine glycan. The chain crosses the membrane as a helical span at residues 176 to 196 (VVASFVSVLVFLLLVVMSAVA). The Cytoplasmic segment spans residues 197–200 (LRKH).

Belongs to the Casparian strip membrane proteins (CASP) family. Homodimer and heterodimers.

The protein resides in the cell membrane. Its function is as follows. Regulates membrane-cell wall junctions and localized cell wall deposition. Required for establishment of the Casparian strip membrane domain (CSD) and the subsequent formation of Casparian strips, a cell wall modification of the root endodermis that determines an apoplastic barrier between the intraorganismal apoplasm and the extraorganismal apoplasm and prevents lateral diffusion. This is Casparian strip membrane protein 1 from Ricinus communis (Castor bean).